Consider the following 438-residue polypeptide: Minor myo-inositol transporter IolF (438 aa).

12 consecutive transmembrane segments (helical) span residues 15–35 (IAAALANYIDAGSIVAGSAGL), 49–69 (IGLLGALSANAISAAVGALLG), 86–106 (MLVYALGICLVLFGVNFPMLL), 108–128 (GYIIIGLSVGADITASWTIIA), 147–167 (WAAGAVVVLLLSVLAGDLGLL), 171–191 (IVFAHLLVIALITYILRIRLP), 230–250 (ILFLMGVYLVWNLAAGVMGFF), 268–288 (LLQMGLFIFTGLGVALIFMPF), 295–312 (TVFGIAAFMAVIGWTLFL), 317–334 (GLPILLLFIVVIGINNGA), 359–379 (LMFFLVRISIGIWSLFVPMII), and 387–407 (MAAILLGCVTASMIIGLLFAP).

This sequence belongs to the major facilitator superfamily. Sugar transporter (TC 2.A.1.1) family.

The protein resides in the cell membrane. It functions in the pathway polyol metabolism; myo-inositol degradation into acetyl-CoA. In terms of biological role, minor myo-inositol uptake transporter. This Bacillus subtilis (strain 168) protein is Minor myo-inositol transporter IolF (iolF).